A 759-amino-acid chain; its full sequence is Polyribonucleotide nucleotidyltransferase (759 aa).

Mg(2+)-binding residues include aspartate 522 and aspartate 528. In terms of domain architecture, KH spans 588-647 (PRITTIKVPVDKIGEVIGPKGKMINSITEETGASISIEDDGTVFVGASNGEAAQAAIDKI). Residues 659–728 (GERFLGTVVK…NRGKISLVLV (70 aa)) form the S1 motif domain. The tract at residues 734 to 759 (AEASDNGSATPSDKAPATADATTAGN) is disordered. The span at 741-759 (SATPSDKAPATADATTAGN) shows a compositional bias: low complexity.

It belongs to the polyribonucleotide nucleotidyltransferase family. Mg(2+) serves as cofactor.

The protein resides in the cytoplasm. The enzyme catalyses RNA(n+1) + phosphate = RNA(n) + a ribonucleoside 5'-diphosphate. Functionally, involved in mRNA degradation. Catalyzes the phosphorolysis of single-stranded polyribonucleotides processively in the 3'- to 5'-direction. The protein is Polyribonucleotide nucleotidyltransferase of Mycobacterium sp. (strain JLS).